Reading from the N-terminus, the 546-residue chain is MADATSPFNVSILDNSTKLSEMVESGWNVLASTSVQAFNEAMDVLEESYPLCKKMLDHNNLFPERDPNDTRIWCNATYDTVLCWPPTPANSSVTLQCPHMKGLDPNKNITKDCHVSGVWSGRNAGEMGPTLPGWTNFTMCYTDEVIYIMQNLNNESLTIAQEVARNARKLEFVGLGLSLVSLILAISIFSYFRRLRVFRNLLHLHLMIAMLMVVILRLVLYIDLIFTGENGPHTNSAEGKTINTMPIVCEGMFFFLEYFKTVTFCWMFLEGIYLNNQIVFGFFNSEPKLLPYFIAGYGIPLVHTMLWLLVVLIKKDFKVERCLGSYYLEPEFWILDGPRMAELVINLFFICNVIRVLYSKVRESNNTSEAGLKKSVKAAMMLLPLLGVPNIMQTIPFAPTRDNIMVFAVWTYTASFTYMYQGLMVASIYCFTNKEVNHVLKTFYARYRLLHKSQNELRRGSRSVASHYAAKNGTANASAPQTNNADEFGKLSPFPSRSKKGSDDSTTKLMKDAVMEEEKNANNNGYGSAGEMTPLREGSNRSTKSP.

Residues 1-171 (MADATSPFNV…EVARNARKLE (171 aa)) are Cytoplasmic-facing. Residues 172-192 (FVGLGLSLVSLILAISIFSYF) form a helical membrane-spanning segment. At 193-205 (RRLRVFRNLLHLH) the chain is on the extracellular side. The helical transmembrane segment at 206-226 (LMIAMLMVVILRLVLYIDLIF) threads the bilayer. The Cytoplasmic portion of the chain corresponds to 227-251 (TGENGPHTNSAEGKTINTMPIVCEG). Residues 252–272 (MFFFLEYFKTVTFCWMFLEGI) form a helical membrane-spanning segment. At 273–292 (YLNNQIVFGFFNSEPKLLPY) the chain is on the extracellular side. A helical transmembrane segment spans residues 293–313 (FIAGYGIPLVHTMLWLLVVLI). Residues 314 to 333 (KKDFKVERCLGSYYLEPEFW) lie on the Cytoplasmic side of the membrane. A helical transmembrane segment spans residues 334–354 (ILDGPRMAELVINLFFICNVI). The Extracellular segment spans residues 355-377 (RVLYSKVRESNNTSEAGLKKSVK). N365 and N366 each carry an N-linked (GlcNAc...) asparagine glycan. Residues 378 to 398 (AAMMLLPLLGVPNIMQTIPFA) traverse the membrane as a helical segment. The Cytoplasmic segment spans residues 399–403 (PTRDN). The helical transmembrane segment at 404–424 (IMVFAVWTYTASFTYMYQGLM) threads the bilayer. Residues 425-546 (VASIYCFTNK…EGSNRSTKSP (122 aa)) lie on the Extracellular side of the membrane. N-linked (GlcNAc...) asparagine glycans are attached at residues N472 and N476. Residues 472–546 (NGTANASAPQ…EGSNRSTKSP (75 aa)) are disordered. The segment covering 473-485 (GTANASAPQTNNA) has biased composition (polar residues). The span at 500–520 (KGSDDSTTKLMKDAVMEEEKN) shows a compositional bias: basic and acidic residues. N540 carries an N-linked (GlcNAc...) asparagine glycan.

It belongs to the G-protein coupled receptor 2 family. Expression was observed in the mechanosensory neuron pairs PLM, ALM, FLP, OLQD, and OLQV, the chemosensory neurons PHA, PHB, RMEV, the ring motor neurons RMED, and the pharyngeal interneuron pair I1. Expression in sensory neurons PHA, PQR and URY are responsible for mate searching behavior. Expressed in AIY, RIM, RIA, and other neurons.

The protein resides in the cell membrane. G-protein coupled receptor for PDF neuropeptides. Plays a role in responses to environmental signals, including chemicals and touch, and in modulating locomotory behaviors. Capable of transducing signals via an adenylate cyclase acy-1 cAMP-dependent pathway. Required to regulate the sex-specific expression of TGFbeta-like daf-7 in the ASJ chemosensory neurons, perhaps acting via acy-1. Involved in modulating mate searching behavior independent of nutritional status. In the presence of food, plays a role in initiating and extending exploratory roaming behavior, perhaps acting in AIY, RIM, RIA, and other neurons, in opposition to 5-hydroxytryptamine (serotonin) signaling. Involved in mediating arousal from the sleep-like state called lethargus, which occurs during molting between larval and adult stages, in part by regulating touch sensitivity. May play a role in circadian rhythms of locomotor activity. Its function is as follows. G-protein coupled receptor which is activated by neuropeptides PDF-1 and PDF-2. Probably acts through the G-alpha(s) type of G proteins to elevate cAMP levels. In terms of biological role, G-protein coupled receptor which is activated by neuropeptides PDF-1 and PDF-2; however, activation is lower compared to isoforms a and b. Probably inhibits cAMP levels through the G-alpha(i/o) type of G proteins. This is Calcitonin receptor-like protein 1 (pdfr-1) from Caenorhabditis elegans.